A 296-amino-acid polypeptide reads, in one-letter code: F-box only protein 2 (296 aa).

Residues 1–41 (MDGDGDPESVGQPEEASPEEQPEEASAEEERPEDQQEEEAA) form a disordered region. Acidic residues predominate over residues 16-40 (ASPEEQPEEASAEEERPEDQQEEEA). One can recognise an F-box domain in the interval 44 to 91 (AAYLDELPEPLLLRVLAALPAAELVQACRLVCLRWKELVDGAPLWLLK). The region spanning 113–296 (FYFLSKRRRN…VTNSSVWVEP (184 aa)) is the FBA domain. A carbohydrate-binding positions include 210–212 (RSD) and 278–279 (YW).

Component of the SCF(FBXO2) complex consisting of CUL1, RBX1, SKP1 and FBXO2. Predominantly detected as heterodimer with SKP1; the heterodimer with SKP1 is not part of the SCF(FBXO2) complex.

The protein resides in the cytoplasm. It localises to the microsome membrane. The protein operates within protein modification; protein ubiquitination. Functionally, substrate recognition component of a SCF (SKP1-CUL1-F-box protein) E3 ubiquitin-protein ligase complex that mediates the ubiquitination and subsequent proteasomal degradation of target proteins. Involved in the endoplasmic reticulum-associated degradation pathway (ERAD) for misfolded lumenal proteins by recognizing and binding sugar chains on unfolded glycoproteins that are retrotranslocated into the cytosol and promoting their ubiquitination and subsequent degradation. Prevents formation of cytosolic aggregates of unfolded glycoproteins that have been retrotranslocated into the cytosol. Able to recognize and bind denatured glycoproteins, preferentially those of the high-mannose type. The sequence is that of F-box only protein 2 (FBXO2) from Homo sapiens (Human).